The sequence spans 443 residues: Cyclic AMP receptor 4 (443 aa).

Residues 1–11 lie on the Extracellular side of the membrane; the sequence is MKVLQEINLTY. N-linked (GlcNAc...) asparagine glycosylation is present at Asn8. Residues 12-32 traverse the membrane as a helical segment; that stretch reads SILVIADFSSIFGCLLVLIAF. The Cytoplasmic portion of the chain corresponds to 33-44; sequence KKLKLLRNHITR. The helical transmembrane segment at 45–65 threads the bilayer; it reads VIACFCVSSLLKDIISTGLTL. The Extracellular segment spans residues 66–89; the sequence is SLGPQNEAGSTSFQCYLYAITITY. The chain crosses the membrane as a helical span at residues 90–110; sequence GSLACWLWTLCLAFSIYNLIV. Over 111-119 the chain is Cytoplasmic; it reads KREPEPEKY. Residues 120-140 traverse the membrane as a helical segment; that stretch reads EKFYHGVCWTIPLICVIVMLA. At 141–161 the chain is on the extracellular side; it reads KKTIEPVGNWCWISEKYVGYR. Residues 162-182 form a helical membrane-spanning segment; the sequence is FGLFYGPFFAIWIISAVLVGL. The Cytoplasmic segment spans residues 183–208; it reads TSRYTYSVIRNSVSDNKDKHMTYQFK. A helical membrane pass occupies residues 209–229; sequence LINYIIVFLLCWVFAIVNRIL. Over 230–263 the chain is Extracellular; that stretch reads NGLGYYPTLPNILHTYFSVSHGFFASVTFIYNNP. A helical transmembrane segment spans residues 264–284; that stretch reads LMWRYWGSKIFLIFAKFGYFV. Residues 285-443 lie on the Cytoplasmic side of the membrane; the sequence is ELQRRLDRNK…DEREKKDNKF (159 aa). Disordered stretches follow at residues 325–354 and 396–443; these read NDIS…QQSP and SFEI…DNKF. Over residues 332-352 the composition is skewed to low complexity; that stretch reads QQQQQQQQTPQQPQQQFQQQQ. Residues 396–410 show a composition bias toward polar residues; sequence SFEITQPSNDLNTIE. Positions 411 to 425 are enriched in low complexity; sequence NNNNYNNNNNNNNNN. The segment covering 429–443 has biased composition (basic and acidic residues); the sequence is IEKEKDEREKKDNKF.

The protein belongs to the G-protein coupled receptor 5 family. In terms of processing, C-terminal Ser or Thr residues may be phosphorylated.

Its subcellular location is the membrane. Its function is as follows. Receptor for cAMP. Regulates axial patterning and cellular differentiation during late development. The activity of this receptor is mediated by G proteins. This Dictyostelium discoideum (Social amoeba) protein is Cyclic AMP receptor 4 (carD).